The following is a 375-amino-acid chain: tRNA-specific 2-thiouridylase MnmA (375 aa).

ATP contacts are provided by residues 9–16 (AMSGGVDS) and Leu35. Cys105 (nucleophile) is an active-site residue. Cys105 and Cys201 are disulfide-bonded. Gly129 provides a ligand contact to ATP. Residues 151 to 153 (KNQ) form an interaction with tRNA region. Cys201 acts as the Cysteine persulfide intermediate in catalysis. The interaction with tRNA stretch occupies residues 307 to 308 (RY).

This sequence belongs to the MnmA/TRMU family.

Its subcellular location is the cytoplasm. It catalyses the reaction S-sulfanyl-L-cysteinyl-[protein] + uridine(34) in tRNA + AH2 + ATP = 2-thiouridine(34) in tRNA + L-cysteinyl-[protein] + A + AMP + diphosphate + H(+). Functionally, catalyzes the 2-thiolation of uridine at the wobble position (U34) of tRNA, leading to the formation of s(2)U34. The polypeptide is tRNA-specific 2-thiouridylase MnmA (Leptospira interrogans serogroup Icterohaemorrhagiae serovar copenhageni (strain Fiocruz L1-130)).